The following is a 342-amino-acid chain: GTP 3',8-cyclase (342 aa).

A Radical SAM core domain is found at 18 to 247 (GFSRRFYYLR…QLRGADDGPA (230 aa)). Arg-27 is a GTP binding site. [4Fe-4S] cluster-binding residues include Cys-34 and Cys-38. Tyr-40 is a binding site for S-adenosyl-L-methionine. Cys-41 provides a ligand contact to [4Fe-4S] cluster. Arg-81 contributes to the GTP binding site. Gly-85 provides a ligand contact to S-adenosyl-L-methionine. A GTP-binding site is contributed by Thr-112. Ser-136 provides a ligand contact to S-adenosyl-L-methionine. Lys-173 is a GTP binding site. S-adenosyl-L-methionine is bound at residue Met-207. [4Fe-4S] cluster-binding residues include Cys-270 and Cys-273. 275 to 277 (RLR) is a binding site for GTP. Cys-287 contributes to the [4Fe-4S] cluster binding site.

It belongs to the radical SAM superfamily. MoaA family. As to quaternary structure, monomer and homodimer. Requires [4Fe-4S] cluster as cofactor.

The enzyme catalyses GTP + AH2 + S-adenosyl-L-methionine = (8S)-3',8-cyclo-7,8-dihydroguanosine 5'-triphosphate + 5'-deoxyadenosine + L-methionine + A + H(+). It participates in cofactor biosynthesis; molybdopterin biosynthesis. In terms of biological role, catalyzes the cyclization of GTP to (8S)-3',8-cyclo-7,8-dihydroguanosine 5'-triphosphate. In Aeromonas hydrophila subsp. hydrophila (strain ATCC 7966 / DSM 30187 / BCRC 13018 / CCUG 14551 / JCM 1027 / KCTC 2358 / NCIMB 9240 / NCTC 8049), this protein is GTP 3',8-cyclase.